A 284-amino-acid chain; its full sequence is Bifunctional protein FolD (284 aa).

NADP(+) is bound by residues 166 to 168 and isoleucine 232; that span reads GAS.

This sequence belongs to the tetrahydrofolate dehydrogenase/cyclohydrolase family. As to quaternary structure, homodimer.

It catalyses the reaction (6R)-5,10-methylene-5,6,7,8-tetrahydrofolate + NADP(+) = (6R)-5,10-methenyltetrahydrofolate + NADPH. The catalysed reaction is (6R)-5,10-methenyltetrahydrofolate + H2O = (6R)-10-formyltetrahydrofolate + H(+). It participates in one-carbon metabolism; tetrahydrofolate interconversion. In terms of biological role, catalyzes the oxidation of 5,10-methylenetetrahydrofolate to 5,10-methenyltetrahydrofolate and then the hydrolysis of 5,10-methenyltetrahydrofolate to 10-formyltetrahydrofolate. The protein is Bifunctional protein FolD of Pseudomonas fluorescens (strain ATCC BAA-477 / NRRL B-23932 / Pf-5).